The sequence spans 360 residues: Peptide chain release factor 1 (360 aa).

Residue Gln237 is modified to N5-methylglutamine.

The protein belongs to the prokaryotic/mitochondrial release factor family. Post-translationally, methylated by PrmC. Methylation increases the termination efficiency of RF1.

Its subcellular location is the cytoplasm. Functionally, peptide chain release factor 1 directs the termination of translation in response to the peptide chain termination codons UAG and UAA. This Pseudomonas syringae pv. syringae (strain B728a) protein is Peptide chain release factor 1.